The chain runs to 579 residues: Pre-mRNA-processing factor 17 (579 aa).

Over residues 1–19 the composition is skewed to low complexity; it reads MSAAIAALAASYGSGSGSE. 2 disordered regions span residues 1 to 47 and 204 to 237; these read MSAA…PSSK and DVAK…PGEE. A Phosphoserine modification is found at Ser-46. WD repeat units follow at residues 286–326, 330–369, 371–413, 416–455, 459–498, 504–545, and 548–578; these read GHTK…RCLR, GHSK…CISR, TNRK…IVQE, RHLG…DFKY, PSMH…RLNK, GHMV…LYSR, and AHDK…IKLW.

As to quaternary structure, component of the pre-catalytic and catalytic spliceosome complexes. Component of the postcatalytic spliceosome P complex. Interacts with PPIL1; this interaction leads to CDC40 isomerization. Post-translationally, undergoes isomerization of the peptide bond between Gly-94 and Pro-95. The reaction is catalyzed by PPIL1.

It localises to the nucleus. The protein resides in the nucleus speckle. Required for pre-mRNA splicing as component of the activated spliceosome. Plays an important role in embryonic brain development; this function does not require proline isomerization. This Homo sapiens (Human) protein is Pre-mRNA-processing factor 17 (CDC40).